The primary structure comprises 259 residues: 3-oxo-5-alpha-steroid 4-dehydrogenase 1 (259 aa).

5 consecutive transmembrane segments (helical) span residues 10–30 (LCLL…SIVG), 86–106 (VLLA…PVLI), 111–131 (PTLL…GYVQ), 146–166 (VTHP…VINI), and 206–226 (WCGF…LFTL).

It belongs to the steroid 5-alpha reductase family. In terms of tissue distribution, liver and prostate (at a low level).

It localises to the microsome membrane. It is found in the endoplasmic reticulum membrane. It carries out the reaction a 3-oxo-5alpha-steroid + NADP(+) = a 3-oxo-Delta(4)-steroid + NADPH + H(+). The enzyme catalyses 5alpha-pregnane-3,20-dione + NADP(+) = progesterone + NADPH + H(+). It catalyses the reaction 17beta-hydroxy-5alpha-androstan-3-one + NADP(+) = testosterone + NADPH + H(+). The catalysed reaction is androst-4-ene-3,17-dione + NADPH + H(+) = 5alpha-androstan-3,17-dione + NADP(+). Functionally, converts testosterone into 5-alpha-dihydrotestosterone and progesterone or corticosterone into their corresponding 5-alpha-3-oxosteroids. It plays a central role in sexual differentiation and androgen physiology. This Rattus norvegicus (Rat) protein is 3-oxo-5-alpha-steroid 4-dehydrogenase 1.